Here is a 301-residue protein sequence, read N- to C-terminus: Glutamine amidotransferase-like protein GlxB (301 aa).

Residue cysteine 2 is part of the active site. The Glutamine amidotransferase type-2 domain maps to 2–298 (CGIVGLFLKD…PATVYFWDHQ (297 aa)).

The polypeptide is Glutamine amidotransferase-like protein GlxB (glxB) (Rhizobium meliloti (strain 1021) (Ensifer meliloti)).